Consider the following 118-residue polypeptide: Large ribosomal subunit protein uL18 (118 aa).

The disordered stretch occupies residues 1–24; that stretch reads MISKPDKNKIRQKRHRRVRGKLSG. Basic residues predominate over residues 10–20; the sequence is IRQKRHRRVRG.

This sequence belongs to the universal ribosomal protein uL18 family. In terms of assembly, part of the 50S ribosomal subunit; part of the 5S rRNA/L5/L18/L25 subcomplex. Contacts the 5S and 23S rRNAs.

In terms of biological role, this is one of the proteins that bind and probably mediate the attachment of the 5S RNA into the large ribosomal subunit, where it forms part of the central protuberance. The protein is Large ribosomal subunit protein uL18 of Streptococcus agalactiae serotype III (strain NEM316).